The chain runs to 485 residues: Pelle-like serine/threonine-protein kinase pik-1 (485 aa).

Residues 115-132 show a composition bias toward polar residues; sequence TSRVSKQMVQPPGSQSAS. The interval 115–155 is disordered; sequence TSRVSKQMVQPPGSQSASRLKKTEIKESSPSPAAAAASQLS. Positions 142-152 are enriched in low complexity; sequence SSPSPAAAAAS. The Protein kinase domain maps to 185–485; sequence FAVSNVIGKG…LCKNSIPPVV (301 aa). ATP-binding positions include 191–199 and Lys214; that span reads IGKGGYGTV. Asp318 acts as the Proton acceptor in catalysis.

The protein belongs to the protein kinase superfamily. TKL Ser/Thr protein kinase family. Pelle subfamily. In terms of assembly, interacts with actl-1. In terms of tissue distribution, expressed in the nervous system.

The enzyme catalyses L-seryl-[protein] + ATP = O-phospho-L-seryl-[protein] + ADP + H(+). It carries out the reaction L-threonyl-[protein] + ATP = O-phospho-L-threonyl-[protein] + ADP + H(+). In terms of biological role, through association with the adapter actl-1, may act downstream of the receptor complex composed of ilcr-1 and ilcr-2, which is a signaling complex that modulates neuronal activity and animal behavior in response to sensory neuron input. The sequence is that of Pelle-like serine/threonine-protein kinase pik-1 from Caenorhabditis elegans.